Reading from the N-terminus, the 132-residue chain is Prefoldin subunit alpha (132 aa).

Belongs to the prefoldin subunit alpha family. Heterohexamer of two alpha and four beta subunits.

The protein localises to the cytoplasm. Functionally, molecular chaperone capable of stabilizing a range of proteins. Seems to fulfill an ATP-independent, HSP70-like function in archaeal de novo protein folding. The polypeptide is Prefoldin subunit alpha (pfdA) (Pyrobaculum aerophilum (strain ATCC 51768 / DSM 7523 / JCM 9630 / CIP 104966 / NBRC 100827 / IM2)).